The primary structure comprises 251 residues: Adapter protein MecA (251 aa).

This sequence belongs to the MecA family. Homodimer.

In terms of biological role, enables the recognition and targeting of unfolded and aggregated proteins to the ClpC protease or to other proteins involved in proteolysis. This Streptococcus agalactiae serotype Ia (strain ATCC 27591 / A909 / CDC SS700) protein is Adapter protein MecA.